Here is a 422-residue protein sequence, read N- to C-terminus: Autophagy-related protein 21 (422 aa).

WD repeat units lie at residues 1–35 (MGLSRFNQDATCFVTSSEGNSVTIYNCDPFGKCFE), 102–153 (SFPH…ITGQ), 166–206 (MTSL…SKSV), 228–268 (VHKG…ESEL), 280–319 (NRPCNINQLTFNSDSTLLGCVGDSDTIHIFKLDSTSRLLS), and 374–414 (KNTK…GSCV). Residues 276–280 (FRRGN) carry the L/FRRG motif motif.

It belongs to the WD repeat PROPPIN family.

Its subcellular location is the cytoplasm. It is found in the membrane. The protein localises to the vacuole membrane. Required for cytoplasm to vacuole transport (Cvt) vesicles formation and mitophagy. Involved in binding of phosphatidylethanolamine to ATG8 and in recruitment of ATG8 and ATG5 to the pre-autophagosomal structure. Protects ATG8 from ARG4-mediated cleavage. This is Autophagy-related protein 21 (ATG21) from Vanderwaltozyma polyspora (strain ATCC 22028 / DSM 70294 / BCRC 21397 / CBS 2163 / NBRC 10782 / NRRL Y-8283 / UCD 57-17) (Kluyveromyces polysporus).